A 90-amino-acid chain; its full sequence is Probable Fe(2+)-trafficking protein (90 aa).

Belongs to the Fe(2+)-trafficking protein family.

In terms of biological role, could be a mediator in iron transactions between iron acquisition and iron-requiring processes, such as synthesis and/or repair of Fe-S clusters in biosynthetic enzymes. This chain is Probable Fe(2+)-trafficking protein, found in Variovorax paradoxus (strain S110).